Consider the following 447-residue polypeptide: Probable alpha-galactosidase B (447 aa).

Residues 1-22 form the signal peptide; the sequence is MTTFLSLTTAAAVLTLARGSNA. 2 disulfides stabilise this stretch: cysteine 45-cysteine 77 and cysteine 127-cysteine 157. The active-site Nucleophile is the aspartate 155. 2 N-linked (GlcNAc...) asparagine glycosylation sites follow: asparagine 162 and asparagine 180. 225–229 contacts substrate; sequence NWGQA. Asparagine 236 carries an N-linked (GlcNAc...) asparagine glycan. Aspartate 247 acts as the Proton donor in catalysis. The N-linked (GlcNAc...) asparagine glycan is linked to asparagine 286.

The protein belongs to the glycosyl hydrolase 27 family.

It is found in the secreted. The catalysed reaction is Hydrolysis of terminal, non-reducing alpha-D-galactose residues in alpha-D-galactosides, including galactose oligosaccharides, galactomannans and galactolipids.. In terms of biological role, hydrolyzes a variety of simple alpha-D-galactoside as well as more complex molecules such as oligosaccharides and polysaccharides. This Neosartorya fischeri (strain ATCC 1020 / DSM 3700 / CBS 544.65 / FGSC A1164 / JCM 1740 / NRRL 181 / WB 181) (Aspergillus fischerianus) protein is Probable alpha-galactosidase B (aglB).